The primary structure comprises 414 residues: tRNA methyltransferase 10 homolog C (414 aa).

The N-terminal 35 residues, 1–35 (MNVTVRFLRPFARYLVPYTFHRTRSNSYSRVLQRY), are a transit peptide targeting the mitochondrion. Ser-79 bears the Phosphoserine mark. A coiled-coil region spans residues 133–162 (GKEMMKKAKQMKKEMKAAAREEAKRARSLE). The SAM-dependent MTase TRM10-type domain occupies 186–378 (LGWKGVQAMQ…KFVPRRKHTG (193 aa)).

Belongs to the class IV-like SAM-binding methyltransferase superfamily. TRM10 family. In terms of assembly, component of mitochondrial ribonuclease P, a complex composed of TRMT10C/MRPP1, HSD17B10/MRPP2 and PRORP/MRPP3. Interacts with HSD17B10/MRPP2; forming the MRPP1-MRPP2 subcomplex of the mitochondrial ribonuclease P complex. Interacts with GRSF1.

Its subcellular location is the mitochondrion matrix. It localises to the mitochondrion nucleoid. It catalyses the reaction adenosine(9) in tRNA + S-adenosyl-L-methionine = N(1)-methyladenosine(9) in tRNA + S-adenosyl-L-homocysteine + H(+). It carries out the reaction guanosine(9) in tRNA + S-adenosyl-L-methionine = N(1)-methylguanosine(9) in tRNA + S-adenosyl-L-homocysteine + H(+). The catalysed reaction is an adenosine in mRNA + S-adenosyl-L-methionine = an N(1)-methyladenosine in mRNA + S-adenosyl-L-homocysteine + H(+). In terms of biological role, mitochondrial tRNA N(1)-methyltransferase involved in mitochondrial tRNA maturation. Component of mitochondrial ribonuclease P, a complex composed of TRMT10C/MRPP1, HSD17B10/MRPP2 and PRORP/MRPP3, which cleaves tRNA molecules in their 5'-ends. Together with HSD17B10/MRPP2, forms a subcomplex of the mitochondrial ribonuclease P, named MRPP1-MRPP2 subcomplex, which displays functions that are independent of the ribonuclease P activity. The MRPP1-MRPP2 subcomplex catalyzes the formation of N(1)-methylguanine and N(1)-methyladenine at position 9 (m1G9 and m1A9, respectively) in tRNAs; TRMT10C/MRPP1 acting as the catalytic N(1)-methyltransferase subunit. The MRPP1-MRPP2 subcomplex also acts as a tRNA maturation platform: following 5'-end cleavage by the mitochondrial ribonuclease P complex, the MRPP1-MRPP2 subcomplex enhances the efficiency of 3'-processing catalyzed by ELAC2, retains the tRNA product after ELAC2 processing and presents the nascent tRNA to the mitochondrial CCA tRNA nucleotidyltransferase TRNT1 enzyme. In addition to tRNA N(1)-methyltransferase activity, TRMT10C/MRPP1 also acts as a mRNA N(1)-methyltransferase by mediating methylation of adenosine residues at the N(1) position of MT-ND5 mRNA. Associates with mitochondrial DNA complexes at the nucleoids to initiate RNA processing and ribosome assembly. The polypeptide is tRNA methyltransferase 10 homolog C (Rattus norvegicus (Rat)).